Here is a 398-residue protein sequence, read N- to C-terminus: MNIHEYQAKALLHEFGVPISKGVPVLRPEDSDAAAKALGGPVWVVKSQIHAGGRGKGKFKEASAGDKGGVRLAKSIDEVNAFAKQMLGATLVTVQTGPDGKQVNRLYIEDGSDIDKEFYLSLLVDRETSKVAFVVSTEGGVNIEDVAHSTPEKIITFSVDPATGVMPHHGRAVAKALKLSGDLAKQAEKLTIQLYTAFVAKDMAMLEINPLVVTKQGQLRVLDAKVSFDSNALFKHPEVVALRDETEEDAKEIEASKYDLNYVALDGTIGCMVNGAGLAMATMDIIKLYGMEPANFLDVGGGASKEKVAAAFKIITADPNVKGILVNIFGGIMKCDVIAEGVVAAVKEVGLKVPLVVRLEGTNVDLGKKIISESGLNVLPADNLDDAAQKIVKAVKGG.

One can recognise an ATP-grasp domain in the interval 9–254; it reads KALLHEFGVP…ETEEDAKEIE (246 aa). Residues Lys-46, 53–55, Glu-109, Ser-112, and Glu-117 contribute to the ATP site; that span reads GRG. Residues Asn-209 and Asp-223 each coordinate Mg(2+). Substrate contacts are provided by residues Asn-274 and 331–333; that span reads GIM.

Belongs to the succinate/malate CoA ligase beta subunit family. Heterotetramer of two alpha and two beta subunits. The cofactor is Mg(2+).

It carries out the reaction succinate + ATP + CoA = succinyl-CoA + ADP + phosphate. It catalyses the reaction GTP + succinate + CoA = succinyl-CoA + GDP + phosphate. Its pathway is carbohydrate metabolism; tricarboxylic acid cycle; succinate from succinyl-CoA (ligase route): step 1/1. Its function is as follows. Succinyl-CoA synthetase functions in the citric acid cycle (TCA), coupling the hydrolysis of succinyl-CoA to the synthesis of either ATP or GTP and thus represents the only step of substrate-level phosphorylation in the TCA. The beta subunit provides nucleotide specificity of the enzyme and binds the substrate succinate, while the binding sites for coenzyme A and phosphate are found in the alpha subunit. The protein is Succinate--CoA ligase [ADP-forming] subunit beta of Bradyrhizobium sp. (strain BTAi1 / ATCC BAA-1182).